We begin with the raw amino-acid sequence, 304 residues long: Homoserine kinase (304 aa).

90–100 (PLARGLGSSAS) is an ATP binding site.

Belongs to the GHMP kinase family. Homoserine kinase subfamily.

It is found in the cytoplasm. It catalyses the reaction L-homoserine + ATP = O-phospho-L-homoserine + ADP + H(+). The protein operates within amino-acid biosynthesis; L-threonine biosynthesis; L-threonine from L-aspartate: step 4/5. In terms of biological role, catalyzes the ATP-dependent phosphorylation of L-homoserine to L-homoserine phosphate. This Staphylococcus aureus (strain MRSA252) protein is Homoserine kinase.